The following is a 189-amino-acid chain: MGKYIKKSKVAGAVSVKDKSHPPALGFRTRAAAAKNLALHRLRSHSDEADSFNYLQLRSRRLVKLPLLTNTRKQQKQQLIPSVNQCQTKNPRASSGPAKKLEPDTTTEEACGDNERISRSDCNFGDKGFDLESENRSMISDSKSIQSEIEDFFASAEQQQQRFFIQKYNFDIVSDNPLPGRYEWVKVMP.

A compositionally biased stretch (polar residues) spans lysine 73–alanine 93. The segment at lysine 73–threonine 107 is disordered.

It belongs to the CDI family. ICK/KRP subfamily. As to quaternary structure, interacts with CYCD4-1. Does not interact with CDKA-1. As to expression, expressed in flowers and at lower levels in roots and leaves.

The protein resides in the nucleus. Its subcellular location is the nucleoplasm. In terms of biological role, inhibits CYCD2-1/CDKA-1 complex kinase activity without interaction with the complex. This Arabidopsis thaliana (Mouse-ear cress) protein is Cyclin-dependent kinase inhibitor 5 (KRP5).